Consider the following 535-residue polypeptide: Serum response factor-binding protein 1 (535 aa).

2 coiled-coil regions span residues 5–27 (LNLN…LIIR) and 107–177 (LKQK…EKCK). Composition is skewed to basic and acidic residues over residues 128–151 (AAEG…ETKK), 159–191 (KNTE…EKAL), 205–325 (AENK…ERPV), 361–376 (DKEK…ERFY), 406–432 (SDKD…EVQK), and 460–472 (TKRE…ERNK). Disordered regions lie at residues 128-435 (AAEG…KEIP) and 453-535 (TKPK…VFDD).

The protein localises to the cytoplasm. The protein resides in the perinuclear region. Its function is as follows. May be involved in regulating transcriptional activation of cardiac genes during the aging process. May play a role in biosynthesis and/or processing of SLC2A4 in adipose cells. The chain is Serum response factor-binding protein 1 from Xenopus tropicalis (Western clawed frog).